The following is a 393-amino-acid chain: Lipid-A-disaccharide synthase (393 aa).

The protein belongs to the LpxB family.

The enzyme catalyses a lipid X + a UDP-2-N,3-O-bis[(3R)-3-hydroxyacyl]-alpha-D-glucosamine = a lipid A disaccharide + UDP + H(+). It functions in the pathway bacterial outer membrane biogenesis; LPS lipid A biosynthesis. In terms of biological role, condensation of UDP-2,3-diacylglucosamine and 2,3-diacylglucosamine-1-phosphate to form lipid A disaccharide, a precursor of lipid A, a phosphorylated glycolipid that anchors the lipopolysaccharide to the outer membrane of the cell. The sequence is that of Lipid-A-disaccharide synthase from Bordetella pertussis (strain Tohama I / ATCC BAA-589 / NCTC 13251).